The following is a 310-amino-acid chain: Phosphoribosylaminoimidazole-succinocarboxamide synthase (310 aa).

The protein belongs to the SAICAR synthetase family.

It carries out the reaction 5-amino-1-(5-phospho-D-ribosyl)imidazole-4-carboxylate + L-aspartate + ATP = (2S)-2-[5-amino-1-(5-phospho-beta-D-ribosyl)imidazole-4-carboxamido]succinate + ADP + phosphate + 2 H(+). Its pathway is purine metabolism; IMP biosynthesis via de novo pathway; 5-amino-1-(5-phospho-D-ribosyl)imidazole-4-carboxamide from 5-amino-1-(5-phospho-D-ribosyl)imidazole-4-carboxylate: step 1/2. This Dechloromonas aromatica (strain RCB) protein is Phosphoribosylaminoimidazole-succinocarboxamide synthase.